The chain runs to 417 residues: Tryptophan synthase beta chain (417 aa).

At Lys-110 the chain carries N6-(pyridoxal phosphate)lysine.

This sequence belongs to the TrpB family. Tetramer of two alpha and two beta chains. Pyridoxal 5'-phosphate serves as cofactor.

The catalysed reaction is (1S,2R)-1-C-(indol-3-yl)glycerol 3-phosphate + L-serine = D-glyceraldehyde 3-phosphate + L-tryptophan + H2O. Its pathway is amino-acid biosynthesis; L-tryptophan biosynthesis; L-tryptophan from chorismate: step 5/5. Functionally, the beta subunit is responsible for the synthesis of L-tryptophan from indole and L-serine. This is Tryptophan synthase beta chain from Prochlorococcus marinus (strain NATL2A).